Reading from the N-terminus, the 479-residue chain is HSPB1-associated protein 1 (479 aa).

The segment at 1 to 25 (MEAGCEGSSPQTLGERTMGEEGERV) is disordered. Residues 88 to 208 (ETECSYVDAT…EDTPFLYPTR (121 aa)) are interaction with HSPB1. Residues 124–288 (WAYADYKYFV…HLARVEEAVT (165 aa)) form the JmjC domain. The segment at 347 to 412 (PRANGEEPGV…GDSQECTSRN (66 aa)) is disordered. Residues 356 to 369 (VQEHMEVEQARDPS) are compositionally biased toward basic and acidic residues.

As to quaternary structure, interacts with CRYAB and HSPB1. As to expression, widely expressed. Highly expressed by Sertoli cells in testis (at protein level).

The protein localises to the cytoplasm. Functionally, may play a role in cellular stress response. The sequence is that of HSPB1-associated protein 1 (Hspbap1) from Rattus norvegicus (Rat).